The following is a 511-amino-acid chain: Histidine ammonia-lyase (511 aa).

The 5-imidazolinone (Ala-Gly) cross-link spans 142 to 144; that stretch reads ASG. Ser-143 bears the 2,3-didehydroalanine (Ser) mark.

It belongs to the PAL/histidase family. In terms of processing, contains an active site 4-methylidene-imidazol-5-one (MIO), which is formed autocatalytically by cyclization and dehydration of residues Ala-Ser-Gly.

It localises to the cytoplasm. It carries out the reaction L-histidine = trans-urocanate + NH4(+). The protein operates within amino-acid degradation; L-histidine degradation into L-glutamate; N-formimidoyl-L-glutamate from L-histidine: step 1/3. The polypeptide is Histidine ammonia-lyase (Brucella anthropi (strain ATCC 49188 / DSM 6882 / CCUG 24695 / JCM 21032 / LMG 3331 / NBRC 15819 / NCTC 12168 / Alc 37) (Ochrobactrum anthropi)).